Reading from the N-terminus, the 365-residue chain is Pectate trisaccharide-lyase (365 aa).

Positions Met1–Ala25 are cleaved as a signal peptide. Ca(2+) contacts are provided by Asp142, Asp164, and Asp168. Residues Ser149–Lys171 form a PbH1 1 repeat. Arg222 is a catalytic residue. The stretch at Gly261 to Pro287 is one PbH1 2 repeat.

This sequence belongs to the polysaccharide lyase 1 family. Homotetramer. The cofactor is Ca(2+).

It is found in the secreted. The enzyme catalyses eliminative cleavage of unsaturated trigalacturonate as the major product from the reducing end of polygalacturonic acid/pectate.. Its function is as follows. Cleaves unsaturated trigalacturonate from pectin. Activity is highest towards polygalacturonic acid, activity on methylated pectins decreases with an increasing degree of methylation. The chain is Pectate trisaccharide-lyase from Thermotoga sp. (strain RQ2).